A 36-amino-acid chain; its full sequence is Pancreatic polypeptide (36 aa).

At Tyr-36 the chain carries Tyrosine amide.

It belongs to the NPY family.

Its subcellular location is the secreted. Its function is as follows. Hormone secreted by pancreatic cells that acts as a regulator of pancreatic and gastrointestinal functions. The polypeptide is Pancreatic polypeptide (PPY) (Anser anser anser (Western greylag goose)).